The primary structure comprises 263 residues: Leucyl/phenylalanyl-tRNA--protein transferase (263 aa).

It belongs to the L/F-transferase family.

Its subcellular location is the cytoplasm. The enzyme catalyses N-terminal L-lysyl-[protein] + L-leucyl-tRNA(Leu) = N-terminal L-leucyl-L-lysyl-[protein] + tRNA(Leu) + H(+). It carries out the reaction N-terminal L-arginyl-[protein] + L-leucyl-tRNA(Leu) = N-terminal L-leucyl-L-arginyl-[protein] + tRNA(Leu) + H(+). It catalyses the reaction L-phenylalanyl-tRNA(Phe) + an N-terminal L-alpha-aminoacyl-[protein] = an N-terminal L-phenylalanyl-L-alpha-aminoacyl-[protein] + tRNA(Phe). Functions in the N-end rule pathway of protein degradation where it conjugates Leu, Phe and, less efficiently, Met from aminoacyl-tRNAs to the N-termini of proteins containing an N-terminal arginine or lysine. The protein is Leucyl/phenylalanyl-tRNA--protein transferase of Novosphingobium aromaticivorans (strain ATCC 700278 / DSM 12444 / CCUG 56034 / CIP 105152 / NBRC 16084 / F199).